The primary structure comprises 445 residues: FAD-dependent monooxygenase sorC (445 aa).

Residues 8 to 28 traverse the membrane as a helical segment; the sequence is PFEVAIVGGGITGLALAVGLL. N31 carries an N-linked (GlcNAc...) asparagine glycan. The FAD site is built by E38 and R119. R201 is a catalytic residue. FAD-binding residues include D323 and A336. N358 carries N-linked (GlcNAc...) asparagine glycosylation.

This sequence belongs to the paxM FAD-dependent monooxygenase family. FAD serves as cofactor.

The protein localises to the membrane. It functions in the pathway secondary metabolite biosynthesis. In terms of biological role, FAD-dependent monooxygenase; part of the gene cluster that mediates the biosynthesis of sorbicillinoids, a diverse group of yellow secondary metabolites that restrict growth of competing pathogenic fungi but not of bacteria. Sorbicillinoids biosynthesis requires the action of two PKSs. SorA iteratively combines three acetyl units and the growing chain is modified by the ketoacyl reductase subunit, and optional by the enoyl reductase subunit in the second cycle. The polyketide is then handed over to the PKS SorB, which adds three more acetyl units, and two methyl groups. SorB releases an aldehyde, which undergoes spontaneous cyclization resulting in the formation of sorbicillin or 2',3'-dihydrosorbicillin. The monooxygenase sorC oxidizes sorbicillin and 2',3'-dihydrosorbicillin to 2',3'-dihydrosorbicillinol and sorbicillinol, respectively. The oxidoreductase sorD further converts sorbicillinol into oxosorbicillinol. Sorbicillinol is the building block for the other sorbicillinoids such as disorbicillinol, bisvertinolon, and dihydrobisvertinolone. The polypeptide is FAD-dependent monooxygenase sorC (Penicillium rubens (strain ATCC 28089 / DSM 1075 / NRRL 1951 / Wisconsin 54-1255) (Penicillium chrysogenum)).